The primary structure comprises 530 residues: 4,4'-diapolycopene aldehyde oxidase (530 aa).

Active-site residues include Glu234 and Cys268.

The protein belongs to the aldehyde dehydrogenase family.

The enzyme catalyses all-trans-4,4'-diapolycopen-4-al + A + H2O = all-trans-4,4'-diapolycopen-4-oate + AH2 + H(+). The catalysed reaction is all-trans-4,4'-diapolycopene-4,4'-dial + 2 A + 2 H2O = all-trans-4,4'-diapolycopene-4,4'-dioate + 2 AH2 + 2 H(+). The protein operates within carotenoid biosynthesis. Involved in the biosynthesis of C30 carotenoids. Catalyzes the oxidation of 4,4'-diapolycopene-4,4'-dial to yield 4,4'-diapolycopene-4,4'-dioic acid. Also able to catalyze the oxidation of 4,4'-diapolycopen-4-al to yield 4,4'-diapolycopen-4-oic acid. The chain is 4,4'-diapolycopene aldehyde oxidase from Methylomonas sp.